Consider the following 290-residue polypeptide: ATP synthase gamma chain (290 aa).

This sequence belongs to the ATPase gamma chain family. In terms of assembly, F-type ATPases have 2 components, CF(1) - the catalytic core - and CF(0) - the membrane proton channel. CF(1) has five subunits: alpha(3), beta(3), gamma(1), delta(1), epsilon(1). CF(0) has three main subunits: a, b and c.

Its subcellular location is the cell inner membrane. Produces ATP from ADP in the presence of a proton gradient across the membrane. The gamma chain is believed to be important in regulating ATPase activity and the flow of protons through the CF(0) complex. The chain is ATP synthase gamma chain from Phenylobacterium zucineum (strain HLK1).